Reading from the N-terminus, the 125-residue chain is uncharacterized protein (125 aa).

It belongs to the HesB/IscA family.

This is an uncharacterized protein from Azospirillum brasilense.